The following is a 640-amino-acid chain: Envelope glycoprotein (640 aa).

Residues 1–32 form the signal peptide; the sequence is MACSTFSKPLKDKINPWGPLIILGILIRAGVS. The tract at residues 32 to 236 is receptor-binding domain (RBD); it reads SVQHDSPHKV…RVLNIGPRVP (205 aa). The Extracellular segment spans residues 33 to 584; sequence VQHDSPHKVF…FNRSPWFTTL (552 aa). Asn-43 and Asn-58 each carry an N-linked (GlcNAc...) asparagine; by host glycan. Intrachain disulfides connect Cys-113–Cys-130 and Cys-122–Cys-135. A disordered region spans residues 259–284; the sequence is RPPQPPPPGAASIVPETAPPSQQPGT. An N-linked (GlcNAc...) asparagine; by host glycan is attached at Asn-300. 3 disulfide bridges follow: Cys-310–Cys-313, Cys-310–Cys-537, and Cys-529–Cys-536. The short motif at 310–313 is the CXXC element; it reads CWLC. N-linked (GlcNAc...) asparagine; by host glycosylation is found at Asn-332, Asn-339, Asn-372, and Asn-408. The segment at 446-466 is fusion peptide; sequence VSLTLALLLGGLTMGGIAAGV. The stretch at 477–511 forms a coiled coil; that stretch reads QQFQQLHAAVQDDLKEVEKSITNLEKSLTSLSEVV. Positions 512 to 528 are immunosuppression; sequence LQNRRGLDLLFLKEGGL. The CX6CC signature appears at 529–537; it reads CAALKEECC. A helical membrane pass occupies residues 585–605; that stretch reads ISTIMGPLIILLLILLFGPCI. Cys-604 carries S-palmitoyl cysteine; by host lipidation. Over 606–640 the chain is Cytoplasmic; the sequence is LNRLVQFVKDRISVVQALVLTQQYHQLKPLEYEPQ. A YXXL motif; contains endocytosis signal motif is present at residues 629–632; sequence YHQL.

As to quaternary structure, the mature envelope protein (Env) consists of a trimer of SU-TM heterodimers attached by a labile interchain disulfide bond. In terms of processing, specific enzymatic cleavages in vivo yield mature proteins. Envelope glycoproteins are synthesized as an inactive precursor that is N-glycosylated and processed likely by host cell furin or by a furin-like protease in the Golgi to yield the mature SU and TM proteins. The cleavage site between SU and TM requires the minimal sequence [KR]-X-[KR]-R. The R-peptide is released from the C-terminus of the cytoplasmic tail of the TM protein upon particle formation as a result of proteolytic cleavage by the viral protease. Cleavage of this peptide is required for TM to become fusogenic. The CXXC motif is highly conserved across a broad range of retroviral envelope proteins. It is thought to participate in the formation of a labile disulfide bond possibly with the CX6CC motif present in the transmembrane protein. Isomerization of the intersubunit disulfide bond to an SU intrachain disulfide bond is thought to occur upon receptor recognition in order to allow membrane fusion. Post-translationally, the transmembrane protein is palmitoylated. In terms of processing, the R-peptide is palmitoylated.

The protein localises to the virion membrane. It localises to the host cell membrane. The surface protein (SU) attaches the virus to the host cell by binding to its receptor. This interaction triggers the refolding of the transmembrane protein (TM) and is thought to activate its fusogenic potential by unmasking its fusion peptide. Fusion occurs at the host cell plasma membrane. Functionally, the transmembrane protein (TM) acts as a class I viral fusion protein. Under the current model, the protein has at least 3 conformational states: pre-fusion native state, pre-hairpin intermediate state, and post-fusion hairpin state. During viral and target cell membrane fusion, the coiled coil regions (heptad repeats) assume a trimer-of-hairpins structure, positioning the fusion peptide in close proximity to the C-terminal region of the ectodomain. The formation of this structure appears to drive apposition and subsequent fusion of viral and target cell membranes. Membranes fusion leads to delivery of the nucleocapsid into the cytoplasm. This Rauscher mink cell focus-inducing virus protein is Envelope glycoprotein (env).